The following is a 486-amino-acid chain: ATP synthase subunit beta (486 aa).

170–177 contributes to the ATP binding site; sequence GGAGVGKT.

It belongs to the ATPase alpha/beta chains family. F-type ATPases have 2 components, CF(1) - the catalytic core - and CF(0) - the membrane proton channel. CF(1) has five subunits: alpha(3), beta(3), gamma(1), delta(1), epsilon(1). CF(0) has three main subunits: a(1), b(2) and c(9-12). The alpha and beta chains form an alternating ring which encloses part of the gamma chain. CF(1) is attached to CF(0) by a central stalk formed by the gamma and epsilon chains, while a peripheral stalk is formed by the delta and b chains.

It is found in the cell membrane. The catalysed reaction is ATP + H2O + 4 H(+)(in) = ADP + phosphate + 5 H(+)(out). Its function is as follows. Produces ATP from ADP in the presence of a proton gradient across the membrane. The catalytic sites are hosted primarily by the beta subunits. The chain is ATP synthase subunit beta from Clavibacter sepedonicus (Clavibacter michiganensis subsp. sepedonicus).